The sequence spans 417 residues: NADH-quinone oxidoreductase subunit D (417 aa).

Belongs to the complex I 49 kDa subunit family. In terms of assembly, NDH-1 is composed of 14 different subunits. Subunits NuoB, C, D, E, F, and G constitute the peripheral sector of the complex.

It localises to the cell inner membrane. The catalysed reaction is a quinone + NADH + 5 H(+)(in) = a quinol + NAD(+) + 4 H(+)(out). Its function is as follows. NDH-1 shuttles electrons from NADH, via FMN and iron-sulfur (Fe-S) centers, to quinones in the respiratory chain. The immediate electron acceptor for the enzyme in this species is believed to be ubiquinone. Couples the redox reaction to proton translocation (for every two electrons transferred, four hydrogen ions are translocated across the cytoplasmic membrane), and thus conserves the redox energy in a proton gradient. The chain is NADH-quinone oxidoreductase subunit D from Paraburkholderia phytofirmans (strain DSM 17436 / LMG 22146 / PsJN) (Burkholderia phytofirmans).